Reading from the N-terminus, the 333-residue chain is Ribokinase (333 aa).

Substrate is bound by residues 10–12, 38–42, and Glu-149; these read NYD and GKGLN. ATP-binding positions include Asn-193 and 248–253; that span reads TLGSRG. Asp-277 and Thr-279 together coordinate K(+). An ATP-binding site is contributed by 282–283; sequence GD. Asp-283 lines the substrate pocket. The active-site Proton acceptor is Asp-283. Residues Thr-313, Arg-316, Gly-318, and Ser-322 each contribute to the K(+) site.

Belongs to the carbohydrate kinase PfkB family. Ribokinase subfamily. As to quaternary structure, homodimer. It depends on Mg(2+) as a cofactor.

The protein resides in the cytoplasm. It is found in the nucleus. The enzyme catalyses D-ribose + ATP = D-ribose 5-phosphate + ADP + H(+). It functions in the pathway carbohydrate metabolism; D-ribose degradation; D-ribose 5-phosphate from beta-D-ribopyranose: step 2/2. Activated by a monovalent cation that binds near, but not in, the active site. The most likely occupant of the site in vivo is potassium. Ion binding induces a conformational change that may alter substrate affinity. Functionally, catalyzes the phosphorylation of ribose at O-5 in a reaction requiring ATP and magnesium. The resulting D-ribose-5-phosphate can then be used either for sythesis of nucleotides, histidine, and tryptophan, or as a component of the pentose phosphate pathway. The protein is Ribokinase of Saccharomyces cerevisiae (strain ATCC 204508 / S288c) (Baker's yeast).